The sequence spans 339 residues: Proto-oncogene serine/threonine-protein kinase mos (339 aa).

The 275-residue stretch at 61–335 folds into the Protein kinase domain; that stretch reads VCLLHRLGSG…LLQKDLKAFR (275 aa). ATP is bound by residues 67–75 and Lys-88; that span reads LGSGGFGSV. Asp-196 serves as the catalytic Proton acceptor.

It belongs to the protein kinase superfamily. Ser/Thr protein kinase family. As to quaternary structure, interacts with MAP2K1/MEK1. Expressed mainly in gonadal tissues, and cardiac and skeletal muscles.

The protein resides in the cytoplasm. The enzyme catalyses L-seryl-[protein] + ATP = O-phospho-L-seryl-[protein] + ADP + H(+). It catalyses the reaction L-threonyl-[protein] + ATP = O-phospho-L-threonyl-[protein] + ADP + H(+). In terms of biological role, serine/threonine kinase involved in the regulation of MAPK signaling. Is an activator of the ERK1/2 signaling cascade playing an essential role in the stimulation of oocyte maturation. This is Proto-oncogene serine/threonine-protein kinase mos from Rattus norvegicus (Rat).